The primary structure comprises 942 residues: Protein translocase subunit SecA (942 aa).

Residues Gln90, 108–112 (GEGKT), and Asp509 each bind ATP.

The protein belongs to the SecA family. As to quaternary structure, monomer and homodimer. Part of the essential Sec protein translocation apparatus which comprises SecA, SecYEG and auxiliary proteins SecDF. Other proteins may also be involved.

It is found in the cell inner membrane. The protein resides in the cellular thylakoid membrane. It localises to the cytoplasm. The catalysed reaction is ATP + H2O + cellular proteinSide 1 = ADP + phosphate + cellular proteinSide 2.. Its function is as follows. Part of the Sec protein translocase complex. Interacts with the SecYEG preprotein conducting channel. Has a central role in coupling the hydrolysis of ATP to the transfer of proteins into and across the cell membrane, serving as an ATP-driven molecular motor driving the stepwise translocation of polypeptide chains across the membrane. Functionally, probably participates in protein translocation into and across both the cytoplasmic and thylakoid membranes in cyanobacterial cells. This Prochlorococcus marinus (strain NATL2A) protein is Protein translocase subunit SecA.